A 193-amino-acid polypeptide reads, in one-letter code: Pyridoxal 5'-phosphate synthase subunit PdxT (193 aa).

50 to 52 (GES) is a binding site for L-glutamine. Residue cysteine 82 is the Nucleophile of the active site. L-glutamine is bound by residues arginine 109 and 136–137 (IR). Active-site charge relay system residues include histidine 172 and glutamate 174.

Belongs to the glutaminase PdxT/SNO family. In the presence of PdxS, forms a dodecamer of heterodimers. Only shows activity in the heterodimer.

The catalysed reaction is aldehydo-D-ribose 5-phosphate + D-glyceraldehyde 3-phosphate + L-glutamine = pyridoxal 5'-phosphate + L-glutamate + phosphate + 3 H2O + H(+). It catalyses the reaction L-glutamine + H2O = L-glutamate + NH4(+). The protein operates within cofactor biosynthesis; pyridoxal 5'-phosphate biosynthesis. Functionally, catalyzes the hydrolysis of glutamine to glutamate and ammonia as part of the biosynthesis of pyridoxal 5'-phosphate. The resulting ammonia molecule is channeled to the active site of PdxS. In Streptococcus pneumoniae (strain JJA), this protein is Pyridoxal 5'-phosphate synthase subunit PdxT.